A 58-amino-acid polypeptide reads, in one-letter code: Cholecystokinins (58 aa).

Sulfotyrosine is present on Y52. F58 is modified (phenylalanine amide).

It belongs to the gastrin/cholecystokinin family. As to quaternary structure, binds to CCK-A receptors in the pancreas and CCK-B receptors in the brain. cholecystokinin 8 binds CCK-A receptors more potently than cholecystokinin 58, cholecystokinin 8 and cholecystokinin 58 bind CCK-B receptors with equal affinity. In terms of processing, the precursor is cleaved by proteases to produce a number of active cholecystokinins. Cholecystokinin 58 occurs in both sulfated (CCK58(s)) and nonsulfated (CCK58(ns)) forms, which differ in their receptor-binding activities. CCK58(s) binds to the CCK-A receptor with high affinity, CCK58(ns) binds poorly to the CCK-A receptor. CCK58(s) and CCK58(ns) both bind the CCK-B receptor. Post-translationally, the precursor is cleaved by ACE, which removes the Gly-Arg-Arg peptide at the C-terminus, leading to mature hormone.

The protein localises to the secreted. This peptide hormone induces gall bladder contraction and the release of pancreatic enzymes in the gut. Its function in the brain is not clear. Binding to CCK-A receptors stimulates amylase release from the pancreas, binding to CCK-B receptors stimulates gastric acid secretion. cholecystokinin 58 and cholecystokinin 8, but not cholecystokinin 58 desnonopeptide, stimulate amylase release from the pancreas. cholecystokinin 58, but not cholecystokinin 8, increases bile-pancreatic volume. This is Cholecystokinins from Canis lupus familiaris (Dog).